A 374-amino-acid chain; its full sequence is UPF0754 membrane protein SA1664 (374 aa).

Transmembrane regions (helical) follow at residues 4 to 24 and 354 to 374; these read LFII…TNVI and SLGF…AIFV.

This sequence belongs to the UPF0754 family.

The protein localises to the cell membrane. This Staphylococcus aureus (strain N315) protein is UPF0754 membrane protein SA1664.